The primary structure comprises 211 residues: MQVYPKFMRSAMATEHFPPVTAPEFAFLGRSNVGKSSLINALLGSKQAKVSSTPGRTRAINFFSLTTSPERQQPNFLFADLPGYGYAKISKSISAEWPKFIEPYLAERPSLALCLCLVDSNIPPQPSDAQLTEFLRSIGRPYLVVATKADRLSGNGRTKAKQTLSRALEAENLLLCSAKTGLGMKELWGEIHRVAAEATEAMKQNQRPPSA.

An EngB-type G domain is found at 21–197 (TAPEFAFLGR…WGEIHRVAAE (177 aa)). GTP contacts are provided by residues 29 to 36 (GRSNVGKS), 55 to 59 (GRTRA), 80 to 83 (DLPG), 147 to 150 (TKAD), and 176 to 178 (CSA). Ser36 and Thr57 together coordinate Mg(2+).

Belongs to the TRAFAC class TrmE-Era-EngA-EngB-Septin-like GTPase superfamily. EngB GTPase family. Requires Mg(2+) as cofactor.

In terms of biological role, necessary for normal cell division and for the maintenance of normal septation. In Acidobacterium capsulatum (strain ATCC 51196 / DSM 11244 / BCRC 80197 / JCM 7670 / NBRC 15755 / NCIMB 13165 / 161), this protein is Probable GTP-binding protein EngB.